A 92-amino-acid polypeptide reads, in one-letter code: RNA-binding protein Hfq (92 aa).

A Sm domain is found at 9–68 (DPFLNALRRERVPVSIYLVNGIKLQGQVESFDQFVILLKNTVSQMVYKHAISTVVPSRPF). Residues 73–82 (HQATNAQAGY) are compositionally biased toward polar residues. The tract at residues 73–92 (HQATNAQAGYNAQHDDGDEK) is disordered.

Belongs to the Hfq family. Homohexamer.

Functionally, RNA chaperone that binds small regulatory RNA (sRNAs) and mRNAs to facilitate mRNA translational regulation in response to envelope stress, environmental stress and changes in metabolite concentrations. Also binds with high specificity to tRNAs. This is RNA-binding protein Hfq from Shewanella pealeana (strain ATCC 700345 / ANG-SQ1).